The chain runs to 957 residues: Protein CRT10 (957 aa).

The interval 695–719 is disordered; sequence NSTEEDDVNSDPENEESGSSLTSFQ. Acidic residues predominate over residues 697–710; the sequence is TEEDDVNSDPENEE. At serine 704 the chain carries Phosphoserine.

Component of a cullin-RING ligase (CRL) composed of 4 subunits: the RING protein HRT1, the cullin RTT101, a linker protein MMS1, and the substrate receptor CRT10. Interacts with MMS1.

Its function is as follows. Substrate targeting component of a cullin-RING-based E3 ubiquitin-protein ligase complex RTT101(MMS1-CRT10). RTT101(MMS1-CRT10) may regulate nucleotide synthesis through transcriptional regulation of RNR genes encoding ribonucleotide reductases. In Saccharomyces cerevisiae (strain ATCC 204508 / S288c) (Baker's yeast), this protein is Protein CRT10 (CRT10).